The sequence spans 156 residues: Small ribosomal subunit protein uS7 (156 aa).

Belongs to the universal ribosomal protein uS7 family. In terms of assembly, part of the 30S ribosomal subunit. Contacts proteins S9 and S11.

One of the primary rRNA binding proteins, it binds directly to 16S rRNA where it nucleates assembly of the head domain of the 30S subunit. Is located at the subunit interface close to the decoding center, probably blocks exit of the E-site tRNA. This chain is Small ribosomal subunit protein uS7, found in Methylobacterium radiotolerans (strain ATCC 27329 / DSM 1819 / JCM 2831 / NBRC 15690 / NCIMB 10815 / 0-1).